The primary structure comprises 1190 residues: Pyruvate-flavodoxin oxidoreductase (1190 aa).

4Fe-4S ferredoxin-type domains follow at residues 687 to 716 and 743 to 773; these read EIPVWDTDVCIQCGKCVMVCPHSVIRSKVY and FTIQVAAEDCTGCGICVDVCPAKNKAQPRKK. Residues cysteine 696, cysteine 699, cysteine 702, cysteine 706, cysteine 752, cysteine 755, cysteine 758, cysteine 762, cysteine 826, cysteine 829, cysteine 854, and cysteine 1089 each coordinate [4Fe-4S] cluster.

It belongs to the pyruvate:ferredoxin/flavodoxin oxidoreductase family. Requires [4Fe-4S] cluster as cofactor.

The enzyme catalyses oxidized [flavodoxin] + pyruvate + CoA + 2 H(+) = reduced [flavodoxin] + acetyl-CoA + CO2. Its function is as follows. Oxidoreductase required for the transfer of electrons from pyruvate to flavodoxin, which reduces nitrogenase. The chain is Pyruvate-flavodoxin oxidoreductase (nifJ) from Trichormus variabilis (strain ATCC 29413 / PCC 7937) (Anabaena variabilis).